The sequence spans 317 residues: Ceramide reductase (317 aa).

A signal peptide spans 1 to 27; that stretch reads MATDARGVVAITGATGFLGRHLVRALA.

The protein belongs to the NAD(P)-dependent epimerase/dehydratase family.

It localises to the periplasm. It carries out the reaction N-acyl-3-oxosphinganine + NADH + H(+) = an N-acylsphinganine + NAD(+). Its pathway is lipid metabolism; sphingolipid metabolism. Involved in de novo bacterial ceramide synthesis. Catalyzes the reduction of bacterial oxidized ceramides to bacterial dihydroceramides. This Caulobacter vibrioides (strain NA1000 / CB15N) (Caulobacter crescentus) protein is Ceramide reductase.